Here is a 264-residue protein sequence, read N- to C-terminus: MENWYAEIITIGNEILSGKTINTNASHIARRILSLGYVVRRITTVMDDIEEISLVFKEAINRKPKLIISTGGLGPTYDDKTSEGLALALGVSFEINKDAYEMIVEKYKKRGLPLTEERVKMAKMPAGAAPVRNDEGIAPGIYILHKDIEILATPGVPREMENVLENFIKYHLKNRPNISYYENSFLLLGVMESTIAPYVKELVKKYNLYIKTHPRSKEMDKPELEVQVAGSSTDKEEITRIVNECINELKQIGTRLGGRVQEIM.

The protein belongs to the CinA family.

In Sulfolobus acidocaldarius (strain ATCC 33909 / DSM 639 / JCM 8929 / NBRC 15157 / NCIMB 11770), this protein is Protein Saci_1508.